The chain runs to 149 residues: Nucleoside diphosphate kinase 1 (149 aa).

The ATP site is built by lysine 10, phenylalanine 58, arginine 86, threonine 92, arginine 103, and asparagine 113. Histidine 116 serves as the catalytic Pros-phosphohistidine intermediate.

Belongs to the NDK family. It depends on Mg(2+) as a cofactor.

The enzyme catalyses a 2'-deoxyribonucleoside 5'-diphosphate + ATP = a 2'-deoxyribonucleoside 5'-triphosphate + ADP. It carries out the reaction a ribonucleoside 5'-diphosphate + ATP = a ribonucleoside 5'-triphosphate + ADP. Its function is as follows. Major role in the synthesis of nucleoside triphosphates other than ATP. The ATP gamma phosphate is transferred to the NDP beta phosphate via a ping-pong mechanism, using a phosphorylated active-site intermediate. This NDK is microtubule-associated. The chain is Nucleoside diphosphate kinase 1 (NDPK1) from Pisum sativum (Garden pea).